A 690-amino-acid chain; its full sequence is Putative glycerophosphocholine phosphodiesterase GPCPD1 homolog 1 (690 aa).

The CBM20 domain occupies 1–122 (MDQDYKAHFK…RKNITDQFGS (122 aa)). In terms of domain architecture, GP-PDE spans 344-654 (MLQIGHRGMG…DRIGEDEVLK (311 aa)). Positions 670-690 (ARSQHNSRSPSMSRRCMSTVE) are disordered. The span at 676–690 (SRSPSMSRRCMSTVE) shows a compositional bias: low complexity.

This sequence belongs to the glycerophosphoryl diester phosphodiesterase family.

This chain is Putative glycerophosphocholine phosphodiesterase GPCPD1 homolog 1, found in Caenorhabditis elegans.